The chain runs to 267 residues: PHD finger protein ALFIN-LIKE 7 (267 aa).

The interval Thr-162 to Asp-207 is disordered. Low complexity predominate over residues Ser-165–Pro-188. Residues Asp-196–Asp-207 are compositionally biased toward acidic residues. The PHD-type zinc-finger motif lies at Ala-211–Lys-263.

This sequence belongs to the Alfin family. Interacts with H3K4me3 and to a lesser extent with H3K4me2.

It is found in the nucleus. Its function is as follows. Histone-binding component that specifically recognizes H3 tails trimethylated on 'Lys-4' (H3K4me3), which mark transcription start sites of virtually all active genes. The protein is PHD finger protein ALFIN-LIKE 7 of Oryza sativa subsp. indica (Rice).